Here is a 204-residue protein sequence, read N- to C-terminus: Urease accessory protein UreG (204 aa).

Residue 15–22 coordinates GTP; the sequence is GPVGSGKT.

Belongs to the SIMIBI class G3E GTPase family. UreG subfamily. As to quaternary structure, homodimer. UreD, UreF and UreG form a complex that acts as a GTP-hydrolysis-dependent molecular chaperone, activating the urease apoprotein by helping to assemble the nickel containing metallocenter of UreC. The UreE protein probably delivers the nickel.

The protein localises to the cytoplasm. Facilitates the functional incorporation of the urease nickel metallocenter. This process requires GTP hydrolysis, probably effectuated by UreG. This Methylobacterium nodulans (strain LMG 21967 / CNCM I-2342 / ORS 2060) protein is Urease accessory protein UreG.